The primary structure comprises 214 residues: A-type ATP synthase subunit D (214 aa).

Belongs to the V-ATPase D subunit family. Has multiple subunits with at least A(3), B(3), C, D, E, F, H, I and proteolipid K(x).

It localises to the cell membrane. In terms of biological role, component of the A-type ATP synthase that produces ATP from ADP in the presence of a proton gradient across the membrane. In Pyrococcus horikoshii (strain ATCC 700860 / DSM 12428 / JCM 9974 / NBRC 100139 / OT-3), this protein is A-type ATP synthase subunit D.